The following is a 383-amino-acid chain: S-adenosylmethionine:tRNA ribosyltransferase-isomerase (383 aa).

The protein belongs to the QueA family. In terms of assembly, monomer.

It localises to the cytoplasm. It catalyses the reaction 7-aminomethyl-7-carbaguanosine(34) in tRNA + S-adenosyl-L-methionine = epoxyqueuosine(34) in tRNA + adenine + L-methionine + 2 H(+). It participates in tRNA modification; tRNA-queuosine biosynthesis. In terms of biological role, transfers and isomerizes the ribose moiety from AdoMet to the 7-aminomethyl group of 7-deazaguanine (preQ1-tRNA) to give epoxyqueuosine (oQ-tRNA). The sequence is that of S-adenosylmethionine:tRNA ribosyltransferase-isomerase from Rickettsia prowazekii (strain Madrid E).